A 266-amino-acid polypeptide reads, in one-letter code: Beta-lactamase OXA-11 (266 aa).

The signal sequence occupies residues 1 to 20 (MKTFAAYVIIACLSSTALAG). Catalysis depends on serine 67, which acts as the Acyl-ester intermediate. The residue at position 70 (lysine 70) is an N6-carboxylysine. 205 to 207 (KTG) contacts substrate.

Belongs to the class-D beta-lactamase family.

The enzyme catalyses a beta-lactam + H2O = a substituted beta-amino acid. Functionally, hydrolyzes carbenicillin, oxacillin and cephalosporin. Does not hydrolyze cefoxitin or carbapenems. In Pseudomonas aeruginosa, this protein is Beta-lactamase OXA-11 (bla).